The sequence spans 324 residues: Phospho-N-acetylmuramoyl-pentapeptide-transferase (324 aa).

10 helical membrane passes run 5 to 25, 52 to 72, 77 to 97, 122 to 142, 149 to 169, 176 to 196, 201 to 221, 227 to 247, 253 to 273, and 302 to 322; these read GLLV…PLFI, PTMG…IMAI, LGAE…IGFL, VIAI…YIMI, FELG…GSNA, LDGL…IIAV, FGVA…LVFN, VFMG…VAIL, LLVI…IQVI, and VVVT…YIGV.

Belongs to the glycosyltransferase 4 family. MraY subfamily. The cofactor is Mg(2+).

Its subcellular location is the cell membrane. It catalyses the reaction UDP-N-acetyl-alpha-D-muramoyl-L-alanyl-gamma-D-glutamyl-meso-2,6-diaminopimeloyl-D-alanyl-D-alanine + di-trans,octa-cis-undecaprenyl phosphate = di-trans,octa-cis-undecaprenyl diphospho-N-acetyl-alpha-D-muramoyl-L-alanyl-D-glutamyl-meso-2,6-diaminopimeloyl-D-alanyl-D-alanine + UMP. It participates in cell wall biogenesis; peptidoglycan biosynthesis. Functionally, catalyzes the initial step of the lipid cycle reactions in the biosynthesis of the cell wall peptidoglycan: transfers peptidoglycan precursor phospho-MurNAc-pentapeptide from UDP-MurNAc-pentapeptide onto the lipid carrier undecaprenyl phosphate, yielding undecaprenyl-pyrophosphoryl-MurNAc-pentapeptide, known as lipid I. The protein is Phospho-N-acetylmuramoyl-pentapeptide-transferase of Bacillus mycoides (strain KBAB4) (Bacillus weihenstephanensis).